Reading from the N-terminus, the 104-residue chain is Iron-sulfur cluster assembly protein CyaY (104 aa).

This sequence belongs to the frataxin family.

Its function is as follows. Involved in iron-sulfur (Fe-S) cluster assembly. May act as a regulator of Fe-S biogenesis. This chain is Iron-sulfur cluster assembly protein CyaY, found in Tolumonas auensis (strain DSM 9187 / NBRC 110442 / TA 4).